The chain runs to 435 residues: Serine--tRNA ligase (435 aa).

Position 242–244 (242–244 (TAE)) interacts with L-serine. ATP is bound at residue 273 to 275 (RSE). E296 is an L-serine binding site. 360–363 (EISS) contacts ATP. S396 contributes to the L-serine binding site.

The protein belongs to the class-II aminoacyl-tRNA synthetase family. Type-1 seryl-tRNA synthetase subfamily. In terms of assembly, homodimer. The tRNA molecule binds across the dimer.

It is found in the cytoplasm. The catalysed reaction is tRNA(Ser) + L-serine + ATP = L-seryl-tRNA(Ser) + AMP + diphosphate + H(+). It catalyses the reaction tRNA(Sec) + L-serine + ATP = L-seryl-tRNA(Sec) + AMP + diphosphate + H(+). Its pathway is aminoacyl-tRNA biosynthesis; selenocysteinyl-tRNA(Sec) biosynthesis; L-seryl-tRNA(Sec) from L-serine and tRNA(Sec): step 1/1. Functionally, catalyzes the attachment of serine to tRNA(Ser). Is also able to aminoacylate tRNA(Sec) with serine, to form the misacylated tRNA L-seryl-tRNA(Sec), which will be further converted into selenocysteinyl-tRNA(Sec). The sequence is that of Serine--tRNA ligase from Vibrio vulnificus (strain CMCP6).